Reading from the N-terminus, the 604-residue chain is MKAQEDPGSSKQHECPDSAGTSTRDQQAPLPAEPKFDMLYKIEDVPPWYLCILLGFQHYLTCFSGTIAVPFLLAEALCVGRDQHMISQLIGTIFTCVGITTLIQTTVGIRLPLFQASAFAFLVPAKAILALERWKCPPEEEIYGNWSMPLNTSHIWHPRIREVQGAIMVSSVVEVVIGLLGLPGALLSYIGPLTVTPTVSLIGLSVFQAAGDRAGSHWGISACSILLIVLFSQYLRNLTFLLPVYRWGKGLTLFRIQIFKMFPIVLAIMTVWLLCYVLTLTDVLPADPTVYGFQARTDARGDIMAISPWIRIPYPCQWGLPTVTVAAVLGMFSATLAGIIESIGDYYACARLAGAPPPPVHAINRGIFTEGVCCIIAGLLGTGNGSTSSSPNIGVLGITKVGSRRVVQYGAGIMLILGAIGKFTALFASLPDPILGGMFCTLFGMITAVGLSNLQFVDMNSSRNLFVLGFSMFFGLTLPNYLDSNPGAINTGVPEVDQILTVLLTTEMFVGGCLAFILDNTVPGSPEERGLIQWKAGAHANSETLASLKSYDFPFGMGMVKRTTFFRYIPICPVFRGFSKTENQPAVLEDAPDNTETGSVCTKV.

The disordered stretch occupies residues 1–29 (MKAQEDPGSSKQHECPDSAGTSTRDQQAP). Residues 1 to 59 (MKAQEDPGSSKQHECPDSAGTSTRDQQAPLPAEPKFDMLYKIEDVPPWYLCILLGFQHY) lie on the Cytoplasmic side of the membrane. The chain crosses the membrane as a helical span at residues 60–80 (LTCFSGTIAVPFLLAEALCVG). Residues 81-88 (RDQHMISQ) are Extracellular-facing. Residues 89–109 (LIGTIFTCVGITTLIQTTVGI) form a helical membrane-spanning segment. A topological domain (cytoplasmic) is located at residue Arg110. A helical transmembrane segment spans residues 111–131 (LPLFQASAFAFLVPAKAILAL). The Extracellular portion of the chain corresponds to 132–166 (ERWKCPPEEEIYGNWSMPLNTSHIWHPRIREVQGA). Residues Asn145 and Asn151 are each glycosylated (N-linked (GlcNAc...) asparagine). A helical transmembrane segment spans residues 167-187 (IMVSSVVEVVIGLLGLPGALL). The Cytoplasmic portion of the chain corresponds to 188-214 (SYIGPLTVTPTVSLIGLSVFQAAGDRA). Residues 215-232 (GSHWGISACSILLIVLFS) traverse the membrane as a helical segment. Residues 233-236 (QYLR) lie on the Extracellular side of the membrane. An intramembrane region (helical) is located at residues 237 to 250 (NLTFLLPVYRWGKG). The Extracellular segment spans residues 251–257 (LTLFRIQ). A helical membrane pass occupies residues 258–278 (IFKMFPIVLAIMTVWLLCYVL). Over 279–319 (TLTDVLPADPTVYGFQARTDARGDIMAISPWIRIPYPCQWG) the chain is Cytoplasmic. The chain crosses the membrane as a helical span at residues 320–340 (LPTVTVAAVLGMFSATLAGII). The Extracellular segment spans residues 341-365 (ESIGDYYACARLAGAPPPPVHAINR). The chain crosses the membrane as a helical span at residues 366–386 (GIFTEGVCCIIAGLLGTGNGS). The Cytoplasmic portion of the chain corresponds to 387–409 (TSSSPNIGVLGITKVGSRRVVQY). A helical membrane pass occupies residues 410–430 (GAGIMLILGAIGKFTALFASL). Residues 431-433 (PDP) are Extracellular-facing. Residues 434–454 (ILGGMFCTLFGMITAVGLSNL) form a helical membrane-spanning segment. Topologically, residues 455-464 (QFVDMNSSRN) are cytoplasmic. The chain crosses the membrane as a helical span at residues 465–485 (LFVLGFSMFFGLTLPNYLDSN). The Extracellular segment spans residues 486 to 497 (PGAINTGVPEVD). A helical membrane pass occupies residues 498–518 (QILTVLLTTEMFVGGCLAFIL). Topologically, residues 519–604 (DNTVPGSPEE…TETGSVCTKV (86 aa)) are cytoplasmic. Position 597 is a phosphothreonine (Thr597). The residue at position 599 (Ser599) is a Phosphoserine. Residue Thr602 is modified to Phosphothreonine.

This sequence belongs to the nucleobase:cation symporter-2 (NCS2) (TC 2.A.40) family. Phosphorylated. Highly expressed in the straight segment of proximal tubules in the kidney, in intestine and liver. Detected in epithelial cells of the bronchiole and epididymis.

It is found in the cell membrane. The enzyme catalyses L-ascorbate(out) + 2 Na(+)(out) = L-ascorbate(in) + 2 Na(+)(in). It carries out the reaction urate(out) + 2 Na(+)(out) = urate(in) + 2 Na(+)(in). Its function is as follows. Sodium/ascorbate cotransporter. Mediates electrogenic uptake of vitamin C, with a stoichiometry of 2 Na(+) for each ascorbate. Has retained some ancestral activity toward nucleobases such as urate, an oxidized purine. Low-affinity high-capacity sodium:urate cotransporter, may regulate serum urate levels by serving as a renal urate re-absorber. The protein is Solute carrier family 23 member 1 (Slc23a1) of Rattus norvegicus (Rat).